Consider the following 910-residue polypeptide: DNA mismatch repair protein MutS (910 aa).

The span at 1–11 shows a compositional bias: basic and acidic residues; it reads MEAKVEEKEPE. The interval 1-21 is disordered; the sequence is MEAKVEEKEPEPVENAGPDAP. 658–665 contributes to the ATP binding site; it reads GPNMGGKS.

This sequence belongs to the DNA mismatch repair MutS family.

Functionally, this protein is involved in the repair of mismatches in DNA. It is possible that it carries out the mismatch recognition step. This protein has a weak ATPase activity. This is DNA mismatch repair protein MutS from Brucella canis (strain ATCC 23365 / NCTC 10854 / RM-666).